The primary structure comprises 112 residues: MYHYKLGRRKDHREAMLRNLVTSLLKEGKIITTEARGKSAKAVAEKLITLAKNDTLHNRRQALAYLYEENVVRKLFKEIGPKYADRPGGYTRIVKIGPRRGDGAMMVLVELL.

It belongs to the bacterial ribosomal protein bL17 family. Part of the 50S ribosomal subunit. Contacts protein L32.

This is Large ribosomal subunit protein bL17 from Carboxydothermus hydrogenoformans (strain ATCC BAA-161 / DSM 6008 / Z-2901).